Consider the following 349-residue polypeptide: Alanine racemase (349 aa).

Lys-35 functions as the Proton acceptor; specific for D-alanine in the catalytic mechanism. Lys-35 bears the N6-(pyridoxal phosphate)lysine mark. Substrate is bound at residue Arg-130. The active-site Proton acceptor; specific for L-alanine is the Tyr-244. Met-292 contributes to the substrate binding site.

The protein belongs to the alanine racemase family. Pyridoxal 5'-phosphate serves as cofactor.

It catalyses the reaction L-alanine = D-alanine. Its pathway is amino-acid biosynthesis; D-alanine biosynthesis; D-alanine from L-alanine: step 1/1. In terms of biological role, catalyzes the interconversion of L-alanine and D-alanine. May also act on other amino acids. In Cereibacter sphaeroides (strain ATCC 17023 / DSM 158 / JCM 6121 / CCUG 31486 / LMG 2827 / NBRC 12203 / NCIMB 8253 / ATH 2.4.1.) (Rhodobacter sphaeroides), this protein is Alanine racemase (alr).